The primary structure comprises 432 residues: PC-esterase domain-containing protein 1B (432 aa).

Disordered regions lie at residues 264 to 293 (EWIKKKKPGPRVEGPPQANRNHPALPLSPP) and 398 to 432 (RGFGRYRPRGPYTPWGQRPRPSKRRAPANPEPRPQ).

Belongs to the PC-esterase family.

This chain is PC-esterase domain-containing protein 1B, found in Homo sapiens (Human).